Reading from the N-terminus, the 59-residue chain is Putative conotoxin (59 aa).

The signal sequence occupies residues 1–25; the sequence is MGMRMMFTVFLLVVLATTVVPITLA. Positions 26–47 are excised as a propeptide; sequence SATDGRNAAANARVSPVISKSS.

This sequence belongs to the conotoxin A superfamily. As to expression, expressed by the venom duct.

The protein resides in the secreted. Functionally, acts as a neurotoxin. This Conus imperialis (Imperial cone) protein is Putative conotoxin.